Consider the following 207-residue polypeptide: Small ribosomal subunit protein uS4 (207 aa).

Positions 33–54 (KLDSKPGQHGRTSGARTSDYGN) are disordered. The span at 42 to 53 (GRTSGARTSDYG) shows a compositional bias: polar residues. Residues 97–160 (SRLDNVVYRM…KKQVRIAEAL (64 aa)) form the S4 RNA-binding domain.

Belongs to the universal ribosomal protein uS4 family. In terms of assembly, part of the 30S ribosomal subunit. Contacts protein S5. The interaction surface between S4 and S5 is involved in control of translational fidelity.

Its function is as follows. One of the primary rRNA binding proteins, it binds directly to 16S rRNA where it nucleates assembly of the body of the 30S subunit. In terms of biological role, with S5 and S12 plays an important role in translational accuracy. In Cupriavidus necator (strain ATCC 17699 / DSM 428 / KCTC 22496 / NCIMB 10442 / H16 / Stanier 337) (Ralstonia eutropha), this protein is Small ribosomal subunit protein uS4.